The following is a 142-amino-acid chain: Putative pre-16S rRNA nuclease (142 aa).

It belongs to the YqgF nuclease family.

The protein localises to the cytoplasm. Functionally, could be a nuclease involved in processing of the 5'-end of pre-16S rRNA. The polypeptide is Putative pre-16S rRNA nuclease (Mesoplasma florum (strain ATCC 33453 / NBRC 100688 / NCTC 11704 / L1) (Acholeplasma florum)).